Here is a 512-residue protein sequence, read N- to C-terminus: ETS translocation variant 3 (512 aa).

Residues Ile-35–Asn-116 constitute a DNA-binding region (ETS). The tract at residues Val-136–His-222 is disordered. Phosphoserine occurs at positions 139, 159, and 315. Residues His-158–Gly-184 show a composition bias toward polar residues. Residues Pro-336 to Ala-512 form a disordered region. Residues Ile-380–Glu-406 show a composition bias toward basic and acidic residues. A Glycyl lysine isopeptide (Lys-Gly) (interchain with G-Cter in SUMO2) cross-link involves residue Lys-381. Lys-388 carries the N6-acetyllysine; alternate modification. Residue Lys-388 forms a Glycyl lysine isopeptide (Lys-Gly) (interchain with G-Cter in SUMO2); alternate linkage. Acidic residues predominate over residues Glu-443 to Glu-452. Composition is skewed to basic and acidic residues over residues Asp-453–Ala-468 and Arg-479–Lys-491.

Belongs to the ETS family.

The protein localises to the nucleus. Functionally, transcriptional repressor that contribute to growth arrest during terminal macrophage differentiation by repressing target genes involved in Ras-dependent proliferation. Represses MMP1 promoter activity. The polypeptide is ETS translocation variant 3 (ETV3) (Pan paniscus (Pygmy chimpanzee)).